Reading from the N-terminus, the 455-residue chain is Probable glycine dehydrogenase (decarboxylating) subunit 1 (455 aa).

Belongs to the GcvP family. N-terminal subunit subfamily. In terms of assembly, the glycine cleavage system is composed of four proteins: P, T, L and H. In this organism, the P 'protein' is a heterodimer of two subunits.

It carries out the reaction N(6)-[(R)-lipoyl]-L-lysyl-[glycine-cleavage complex H protein] + glycine + H(+) = N(6)-[(R)-S(8)-aminomethyldihydrolipoyl]-L-lysyl-[glycine-cleavage complex H protein] + CO2. In terms of biological role, the glycine cleavage system catalyzes the degradation of glycine. The P protein binds the alpha-amino group of glycine through its pyridoxal phosphate cofactor; CO(2) is released and the remaining methylamine moiety is then transferred to the lipoamide cofactor of the H protein. In Saccharolobus islandicus (strain Y.N.15.51 / Yellowstone #2) (Sulfolobus islandicus), this protein is Probable glycine dehydrogenase (decarboxylating) subunit 1.